The following is an 85-amino-acid chain: UPF0297 protein LBA0418 (85 aa).

The protein belongs to the UPF0297 family.

This chain is UPF0297 protein LBA0418, found in Lactobacillus acidophilus (strain ATCC 700396 / NCK56 / N2 / NCFM).